The chain runs to 432 residues: Adenosylhomocysteinase (432 aa).

Residues Thr-56, Asp-131, and Glu-156 each contribute to the substrate site. Residue 157 to 159 participates in NAD(+) binding; the sequence is TTT. Substrate contacts are provided by Lys-186 and Asp-190. NAD(+) contacts are provided by residues Asn-191, 222–227, Glu-243, 299–301, and Asn-346; these read GDVGKG and IGH.

The protein belongs to the adenosylhomocysteinase family. Requires NAD(+) as cofactor.

It carries out the reaction S-adenosyl-L-homocysteine + H2O = L-homocysteine + adenosine. It participates in amino-acid biosynthesis; L-homocysteine biosynthesis; L-homocysteine from S-adenosyl-L-homocysteine: step 1/1. In terms of biological role, adenosylhomocysteine is a competitive inhibitor of S-adenosyl-L-methionine-dependent methyl transferase reactions; therefore adenosylhomocysteinase may play a key role in the control of methylations via regulation of the intracellular concentration of adenosylhomocysteine. The chain is Adenosylhomocysteinase (Ahcy13) from Anopheles gambiae (African malaria mosquito).